A 470-amino-acid chain; its full sequence is L-seryl-tRNA(Sec) selenium transferase (470 aa).

Lys-294 carries the post-translational modification N6-(pyridoxal phosphate)lysine.

This sequence belongs to the SelA family. Pyridoxal 5'-phosphate serves as cofactor.

The protein resides in the cytoplasm. It carries out the reaction L-seryl-tRNA(Sec) + selenophosphate + H(+) = L-selenocysteinyl-tRNA(Sec) + phosphate. The protein operates within aminoacyl-tRNA biosynthesis; selenocysteinyl-tRNA(Sec) biosynthesis; selenocysteinyl-tRNA(Sec) from L-seryl-tRNA(Sec) (bacterial route): step 1/1. Converts seryl-tRNA(Sec) to selenocysteinyl-tRNA(Sec) required for selenoprotein biosynthesis. In Solidesulfovibrio magneticus (strain ATCC 700980 / DSM 13731 / RS-1) (Desulfovibrio magneticus), this protein is L-seryl-tRNA(Sec) selenium transferase.